Here is a 464-residue protein sequence, read N- to C-terminus: Vacuolar protein sorting-associated protein atg6 (464 aa).

A disordered region spans residues 38-57 (SLTEMNESGESDDQMNSSSE). A coiled-coil region spans residues 144-274 (VECAELLTEE…NSRKLEKLQK (131 aa)). The interval 275 to 461 (MNVFSDIFYI…EAYVSSQDKQ (187 aa)) is BARA.

The protein belongs to the beclin family. Component of the autophagy-specific vps34 PI3-kinase complex I composed of vps15, atg6, pik3/vps34, atg14 and atg38. Also a component of the vps34 PI3-kinase complex II composed of atg6, pik3, vps15 and vps38.

The protein resides in the endosome membrane. It localises to the vacuole membrane. The protein localises to the preautophagosomal structure membrane. Its subcellular location is the cytoplasm. Its function is as follows. Functions as a part of the autophagy-specific VPS34 PI3-kinase complex I that plays a role in autophagosome assembly. This complex is essential to recruit the atg8-phosphatidylinositol conjugate and the atg12-atg5 conjugate to the pre-autophagosomal structure. Also functions as part of the VPS34 PI3-kinase complex II. This Schizosaccharomyces pombe (strain 972 / ATCC 24843) (Fission yeast) protein is Vacuolar protein sorting-associated protein atg6 (atg6).